The primary structure comprises 166 residues: Large ribosomal subunit protein bL19 (166 aa).

This sequence belongs to the bacterial ribosomal protein bL19 family.

In terms of biological role, this protein is located at the 30S-50S ribosomal subunit interface and may play a role in the structure and function of the aminoacyl-tRNA binding site. This is Large ribosomal subunit protein bL19 from Chelativorans sp. (strain BNC1).